A 370-amino-acid polypeptide reads, in one-letter code: sn-glycerol-3-phosphate import ATP-binding protein UgpC (370 aa).

Positions 4 to 235 constitute an ABC transporter domain; sequence LRLDGIRKRY…PATRFVASFL (232 aa). ATP is bound at residue 37–44; sequence GPSGCGKS.

Belongs to the ABC transporter superfamily. sn-glycerol-3-phosphate importer (TC 3.A.1.1.3) family. As to quaternary structure, the complex is composed of two ATP-binding proteins (UgpC), two transmembrane proteins (UgpA and UgpE) and a solute-binding protein (UgpB).

Its subcellular location is the cell inner membrane. It catalyses the reaction sn-glycerol 3-phosphate(out) + ATP + H2O = sn-glycerol 3-phosphate(in) + ADP + phosphate + H(+). Its function is as follows. Part of the ABC transporter complex UgpBAEC involved in sn-glycerol-3-phosphate (G3P) import. Responsible for energy coupling to the transport system. The polypeptide is sn-glycerol-3-phosphate import ATP-binding protein UgpC (Chromohalobacter salexigens (strain ATCC BAA-138 / DSM 3043 / CIP 106854 / NCIMB 13768 / 1H11)).